The chain runs to 693 residues: Polyribonucleotide nucleotidyltransferase (693 aa).

Mg(2+)-binding residues include Asp-489 and Asp-495. In terms of domain architecture, KH spans 556 to 615 (PQIHVMNINPAKIKDVVGRGGATVKGIVEKTGAQIDTSDSGEVKVFAKDKKSMDMAVAMI). Positions 625–693 (GQVYKGKIVK…GRVKLSLVAR (69 aa)) constitute an S1 motif domain.

This sequence belongs to the polyribonucleotide nucleotidyltransferase family. As to quaternary structure, component of the RNA degradosome, which is a multiprotein complex involved in RNA processing and mRNA degradation. Mg(2+) serves as cofactor.

The protein localises to the cytoplasm. The catalysed reaction is RNA(n+1) + phosphate = RNA(n) + a ribonucleoside 5'-diphosphate. Functionally, involved in mRNA degradation. Catalyzes the phosphorolysis of single-stranded polyribonucleotides processively in the 3'- to 5'-direction. The protein is Polyribonucleotide nucleotidyltransferase of Francisella tularensis subsp. novicida (strain U112).